We begin with the raw amino-acid sequence, 130 residues long: MAKVPSRSPRKRVRKQVADGMAHIHASFNNTIITITDRQGNALSWATSGGSGFRGSRKSTPFAAQVAAERAGTAAQDYGVKNLEVFVKGPGPGRESAIRALNSVGYKITNITDVTPIPHNGCRPPKKRRV.

The protein belongs to the universal ribosomal protein uS11 family. As to quaternary structure, part of the 30S ribosomal subunit. Interacts with proteins S7 and S18. Binds to IF-3.

Its function is as follows. Located on the platform of the 30S subunit, it bridges several disparate RNA helices of the 16S rRNA. Forms part of the Shine-Dalgarno cleft in the 70S ribosome. The chain is Small ribosomal subunit protein uS11 from Shewanella halifaxensis (strain HAW-EB4).